A 252-amino-acid chain; its full sequence is Chitooligosaccharide deacetylase (252 aa).

Residues His61 and His125 each contribute to the Mg(2+) site.

Belongs to the YdjC deacetylase family. ChbG subfamily. As to quaternary structure, homodimer. It depends on Mg(2+) as a cofactor.

It is found in the cytoplasm. The catalysed reaction is N,N'-diacetylchitobiose + H2O = N-acetyl-beta-D-glucosaminyl-(1-&gt;4)-D-glucosamine + acetate. It catalyses the reaction diacetylchitobiose-6'-phosphate + H2O = N'-monoacetylchitobiose-6'-phosphate + acetate. Its pathway is glycan degradation; chitin degradation. Involved in the degradation of chitin. ChbG is essential for growth on the acetylated chitooligosaccharides chitobiose and chitotriose but is dispensable for growth on cellobiose and chitosan dimer, the deacetylated form of chitobiose. Deacetylation of chitobiose-6-P and chitotriose-6-P is necessary for both the activation of the chb promoter by the regulatory protein ChbR and the hydrolysis of phosphorylated beta-glucosides by the phospho-beta-glucosidase ChbF. Catalyzes the removal of only one acetyl group from chitobiose-6-P to yield monoacetylchitobiose-6-P, the inducer of ChbR and the substrate of ChbF. The sequence is that of Chitooligosaccharide deacetylase from Escherichia coli O45:K1 (strain S88 / ExPEC).